Consider the following 357-residue polypeptide: Thiamine thiazole synthase 1, chloroplastic (357 aa).

Residues 1–51 (MSISAAGVATGLGANVELKSNVGSSSSSVAGVRLFTSRKAQLRRCAAPATS) constitute a chloroplast transit peptide. Substrate is bound by residues Ala-103, 123–124 (EQ), Gly-131, and Ala-196. 2,3-didehydroalanine (Cys) is present on Cys-225. Residues Asp-227, His-242, Met-294, and 304–306 (RMG) each bind substrate.

It belongs to the THI4 family. As to quaternary structure, homooctamer. Requires Fe cation as cofactor. Post-translationally, during the catalytic reaction, a sulfide is transferred from Cys-225 to a reaction intermediate, generating a dehydroalanine residue.

It is found in the plastid. Its subcellular location is the chloroplast. The catalysed reaction is [ADP-thiazole synthase]-L-cysteine + glycine + NAD(+) = [ADP-thiazole synthase]-dehydroalanine + ADP-5-ethyl-4-methylthiazole-2-carboxylate + nicotinamide + 3 H2O + 2 H(+). In terms of biological role, involved in biosynthesis of the thiamine precursor thiazole. Catalyzes the conversion of NAD and glycine to adenosine diphosphate 5-(2-hydroxyethyl)-4-methylthiazole-2-carboxylic acid (ADT), an adenylated thiazole intermediate. The reaction includes an iron-dependent sulfide transfer from a conserved cysteine residue of the protein to a thiazole intermediate. The enzyme can only undergo a single turnover, which suggests it is a suicide enzyme. May have additional roles in adaptation to various stress conditions and in DNA damage tolerance. This is Thiamine thiazole synthase 1, chloroplastic from Physcomitrium patens (Spreading-leaved earth moss).